The primary structure comprises 225 residues: Lipoprotein CseA (225 aa).

A signal peptide spans 1–36; sequence MRGLTDGRTPRGTRRTTQAASTAVAVFVALGVSLAG. The N-palmitoyl cysteine moiety is linked to residue Cys-37. Cys-37 carries the S-diacylglycerol cysteine lipid modification. Disordered stretches follow at residues 40–77 and 205–225; these read GGTG…APDR and THND…EPDS. The segment covering 60 to 73 has biased composition (low complexity); the sequence is SASPAPAAKASPSK.

It is found in the cell membrane. In terms of biological role, may be involved in the stabilization of the cell envelope or may interact with the sensor protein CseC to modulate its activity, in response to cell envelope stress. The chain is Lipoprotein CseA (cseA) from Streptomyces coelicolor (strain ATCC BAA-471 / A3(2) / M145).